The primary structure comprises 968 residues: RNA polymerase-associated protein RapA (968 aa).

Residues 164–334 (EVGQRHAPRV…FARLRLLDPN (171 aa)) enclose the Helicase ATP-binding domain. Residue 177 to 184 (DEVGLGKT) participates in ATP binding. Residues 280-283 (DEAH) carry the DEAH box motif. The region spanning 493-644 (WLVDFLLDLR…TCPTGRALYD (152 aa)) is the Helicase C-terminal domain.

Belongs to the SNF2/RAD54 helicase family. RapA subfamily. In terms of assembly, interacts with the RNAP. Has a higher affinity for the core RNAP than for the holoenzyme. Its ATPase activity is stimulated by binding to RNAP.

Functionally, transcription regulator that activates transcription by stimulating RNA polymerase (RNAP) recycling in case of stress conditions such as supercoiled DNA or high salt concentrations. Probably acts by releasing the RNAP, when it is trapped or immobilized on tightly supercoiled DNA. Does not activate transcription on linear DNA. Probably not involved in DNA repair. This Sodalis glossinidius (strain morsitans) protein is RNA polymerase-associated protein RapA.